Consider the following 214-residue polypeptide: Dimethylamine corrinoid protein 2 (214 aa).

A B12-binding N-terminal domain is found at 1 to 91; that stretch reads MATKEELIQE…DMPAGAATKK (91 aa). One can recognise a B12-binding domain in the interval 92–214; the sequence is LGVIVNGTVE…AVAKAKELLL (123 aa). A methylcob(III)alamin-binding site is contributed by histidine 105.

The protein belongs to the methylamine corrinoid protein family.

It functions in the pathway one-carbon metabolism; methanogenesis from dimethylamine. Its function is as follows. Acts as a methyl group carrier between MtbB and MtbA. This is Dimethylamine corrinoid protein 2 (mtbC2) from Methanosarcina mazei (strain ATCC BAA-159 / DSM 3647 / Goe1 / Go1 / JCM 11833 / OCM 88) (Methanosarcina frisia).